Here is a 197-residue protein sequence, read N- to C-terminus: Dephospho-CoA kinase (197 aa).

A DPCK domain is found at 2–197; it reads IIGITGGIAS…SALLLLANPR (196 aa). 10–15 lines the ATP pocket; sequence ASGKST.

This sequence belongs to the CoaE family.

The protein resides in the cytoplasm. The catalysed reaction is 3'-dephospho-CoA + ATP = ADP + CoA + H(+). It participates in cofactor biosynthesis; coenzyme A biosynthesis; CoA from (R)-pantothenate: step 5/5. In terms of biological role, catalyzes the phosphorylation of the 3'-hydroxyl group of dephosphocoenzyme A to form coenzyme A. This Streptococcus pyogenes serotype M1 protein is Dephospho-CoA kinase.